A 398-amino-acid polypeptide reads, in one-letter code: Phosphoglycerate kinase (398 aa).

Substrate is bound by residues 21-23, Arg-36, 59-62, Arg-119, and Arg-157; these read DFN and HLGR. Residues Lys-208, Gly-296, Glu-327, and 354–357 each bind ATP; that span reads GGDS.

This sequence belongs to the phosphoglycerate kinase family. As to quaternary structure, monomer.

It localises to the cytoplasm. The enzyme catalyses (2R)-3-phosphoglycerate + ATP = (2R)-3-phospho-glyceroyl phosphate + ADP. It functions in the pathway carbohydrate degradation; glycolysis; pyruvate from D-glyceraldehyde 3-phosphate: step 2/5. The sequence is that of Phosphoglycerate kinase (pgk) from Lactococcus lactis subsp. lactis (strain IL1403) (Streptococcus lactis).